A 128-amino-acid chain; its full sequence is uncharacterized protein (128 aa).

A run of 3 helical transmembrane segments spans residues 1–21 (MLVF…LIFL), 51–71 (VRVE…AILG), and 76–96 (ANFL…VYYV).

Its subcellular location is the membrane. This is an uncharacterized protein from Saccharomyces cerevisiae (strain ATCC 204508 / S288c) (Baker's yeast).